The following is a 96-amino-acid chain: Co-chaperonin GroES (96 aa).

The protein belongs to the GroES chaperonin family. Heptamer of 7 subunits arranged in a ring. Interacts with the chaperonin GroEL.

The protein resides in the cytoplasm. Its function is as follows. Together with the chaperonin GroEL, plays an essential role in assisting protein folding. The GroEL-GroES system forms a nano-cage that allows encapsulation of the non-native substrate proteins and provides a physical environment optimized to promote and accelerate protein folding. GroES binds to the apical surface of the GroEL ring, thereby capping the opening of the GroEL channel. This chain is Co-chaperonin GroES, found in Allochromatium vinosum (Chromatium vinosum).